Reading from the N-terminus, the 433-residue chain is Ribosomal protein uS12 methylthiotransferase RimO (433 aa).

Positions 6-122 (QSIFLLSLGC…IISVLGGSYR (117 aa)) constitute an MTTase N-terminal domain. Cys-15, Cys-51, Cys-85, Cys-146, Cys-150, and Cys-153 together coordinate [4Fe-4S] cluster. Residues 132–362 (LTPPHYAWLK…MELQESIAAE (231 aa)) enclose the Radical SAM core domain. One can recognise a TRAM domain in the interval 365 to 432 (RELEGRVMKV…AYELHGRVND (68 aa)).

It belongs to the methylthiotransferase family. RimO subfamily. Requires [4Fe-4S] cluster as cofactor.

The protein localises to the cytoplasm. It catalyses the reaction L-aspartate(89)-[ribosomal protein uS12]-hydrogen + (sulfur carrier)-SH + AH2 + 2 S-adenosyl-L-methionine = 3-methylsulfanyl-L-aspartate(89)-[ribosomal protein uS12]-hydrogen + (sulfur carrier)-H + 5'-deoxyadenosine + L-methionine + A + S-adenosyl-L-homocysteine + 2 H(+). In terms of biological role, catalyzes the methylthiolation of an aspartic acid residue of ribosomal protein uS12. In Prosthecochloris aestuarii (strain DSM 271 / SK 413), this protein is Ribosomal protein uS12 methylthiotransferase RimO.